The following is a 695-amino-acid chain: MALLLVSLLAFMSLGSGCHHRLCHCSNRVFLCQESKVTEIPSDLPRNAVELRFVLTKLRVIPKGAFSGFGDLEKIEISQNDALEVIEADVFSNLPNLHEIRIEKANNLLYINPEAFQNLPNLRYLLISNTGIRHLPAVHKIQSLQKVLLDIQDNINIHTVERNSFLGLSSESVILRLNKNGIQEIQNCAFNGTQLDDLNLSDNDNLEELPNGVFQGASGPVILDISRTRINSLPSHGLENLKKLRARSTYNLKKLPSLEKFAALVEASLTYPSHCCAFANWRRQISELHPICNKSILRQEVNDITQAGAQRVSLAEDDEFSYSRGFDTMYAEFDYDLCKEVVDVTCSPKPDAFNPCEDIMGYNILRVLIWFISILAITGNVAVLVVLTTSQYKLTVPRFLMCNLAFADLCIGIYLLLIASVDVHTRTLYHNYAIDWQTGAGCADCWLFTVFASELSVYTLTAITLERWHTITHAMQLDCKVQLRHAASIMVIGWIFSSAAALFPIFGVSSYMKVSICLPMDIDSPLSQLYVMFLLVLNVLAFVVICGCYLHIYLTVRNPNIVSSASDTRIAKRMATLIFTDFLCMAPISFFAISASLKVPLITVSKAKILLVLFYPINSCANPFLYAIFTKNFRRDLFILLSKFGCYEMQAQIYRTETSSTAHNSHPRNGHSSSVSRVTNGSSYILAPLNHLAQN.

The first 17 residues, 1-17, serve as a signal peptide directing secretion; it reads MALLLVSLLAFMSLGSG. 2 cysteine pairs are disulfide-bonded: Cys-18/Cys-25 and Cys-23/Cys-32. An LRRNT domain is found at 18-46; the sequence is CHHRLCHCSNRVFLCQESKVTEIPSDLPR. Over 18 to 366 the chain is Extracellular; sequence CHHRLCHCSN…EDIMGYNILR (349 aa). LRR repeat units lie at residues 49 to 72, 73 to 97, 98 to 118, 119 to 143, 144 to 169, 170 to 192, 193 to 216, 217 to 240, and 241 to 259; these read VELR…FGDL, EKIE…LPNL, HEIR…AFQN, LPNL…KIQS, LQKV…LGLS, SESV…AFNG, TQLD…VFQG, ASGP…GLEN, and LKKL…PSLE. N-linked (GlcNAc...) asparagine glycans are attached at residues Asn-191 and Asn-199. 4 disulfide bridges follow: Cys-275–Cys-346, Cys-276–Cys-292, Cys-276–Cys-356, and Cys-292–Cys-338. An N-linked (GlcNAc...) asparagine glycan is attached at Asn-293. Position 335 is a sulfotyrosine (Tyr-335). A helical transmembrane segment spans residues 367–387; it reads VLIWFISILAITGNVAVLVVL. The Cytoplasmic portion of the chain corresponds to 388-398; the sequence is TTSQYKLTVPR. A helical transmembrane segment spans residues 399-421; the sequence is FLMCNLAFADLCIGIYLLLIASV. Residues 422-443 lie on the Extracellular side of the membrane; sequence DVHTRTLYHNYAIDWQTGAGCA. Cys-442 and Cys-517 are oxidised to a cystine. The chain crosses the membrane as a helical span at residues 444–465; that stretch reads DCWLFTVFASELSVYTLTAITL. At 466-485 the chain is on the cytoplasmic side; that stretch reads ERWHTITHAMQLDCKVQLRH. A helical membrane pass occupies residues 486-508; the sequence is AASIMVIGWIFSSAAALFPIFGV. Residues 509 to 528 are Extracellular-facing; the sequence is SSYMKVSICLPMDIDSPLSQ. A helical transmembrane segment spans residues 529–550; the sequence is LYVMFLLVLNVLAFVVICGCYL. The Cytoplasmic segment spans residues 551 to 573; sequence HIYLTVRNPNIVSSASDTRIAKR. The chain crosses the membrane as a helical span at residues 574–597; the sequence is MATLIFTDFLCMAPISFFAISASL. Residues 598–608 are Extracellular-facing; the sequence is KVPLITVSKAK. Residues 609–630 form a helical membrane-spanning segment; that stretch reads ILLVLFYPINSCANPFLYAIFT. Residues 631–695 are Cytoplasmic-facing; it reads KNFRRDLFIL…LAPLNHLAQN (65 aa). Residues 658-677 are disordered; it reads TSSTAHNSHPRNGHSSSVSR.

It belongs to the G-protein coupled receptor 1 family. FSH/LSH/TSH subfamily. Homotrimer. Functions as a homotrimer binding the FSH hormone heterodimer composed of CGA and FSHB. Interacts with ARRB2. Interacts with APPL2; interaction is independent of follicle stimulating hormone stimulation. N-glycosylated; indirectly required for FSH-binding, possibly via a conformational change that allows high affinity binding of hormone. In terms of processing, sulfated.

The protein resides in the cell membrane. Its function is as follows. G protein-coupled receptor for follitropin, the follicle-stimulating hormone. Through cAMP production activates the downstream PI3K-AKT and ERK1/ERK2 signaling pathways. The polypeptide is Follicle-stimulating hormone receptor (FSHR) (Cavia porcellus (Guinea pig)).